Consider the following 159-residue polypeptide: ATP synthase subunit b (159 aa).

Residues 7–27 form a helical membrane-spanning segment; the sequence is DFIWTLINFFVLLFILKILLY.

Belongs to the ATPase B chain family. As to quaternary structure, F-type ATPases have 2 components, F(1) - the catalytic core - and F(0) - the membrane proton channel. F(1) has five subunits: alpha(3), beta(3), gamma(1), delta(1), epsilon(1). F(0) has three main subunits: a(1), b(2) and c(10-14). The alpha and beta chains form an alternating ring which encloses part of the gamma chain. F(1) is attached to F(0) by a central stalk formed by the gamma and epsilon chains, while a peripheral stalk is formed by the delta and b chains.

The protein localises to the cell membrane. Functionally, f(1)F(0) ATP synthase produces ATP from ADP in the presence of a proton or sodium gradient. F-type ATPases consist of two structural domains, F(1) containing the extramembraneous catalytic core and F(0) containing the membrane proton channel, linked together by a central stalk and a peripheral stalk. During catalysis, ATP synthesis in the catalytic domain of F(1) is coupled via a rotary mechanism of the central stalk subunits to proton translocation. In terms of biological role, component of the F(0) channel, it forms part of the peripheral stalk, linking F(1) to F(0). The sequence is that of ATP synthase subunit b from Carboxydothermus hydrogenoformans (strain ATCC BAA-161 / DSM 6008 / Z-2901).